The chain runs to 254 residues: E3 ubiquitin-protein ligase NEURL3 (254 aa).

The 158-residue stretch at 17–174 folds into the NHR domain; that stretch reads ALSFHGDATG…TTKAIELLDP (158 aa). The segment at 197–236 adopts an RING-type zinc-finger fold; that stretch reads CVICFHNTANTRLMPCGHSQFCGSCAWHIFKDTARCPMCR.

Its subcellular location is the cytoplasm. It carries out the reaction S-ubiquitinyl-[E2 ubiquitin-conjugating enzyme]-L-cysteine + [acceptor protein]-L-lysine = [E2 ubiquitin-conjugating enzyme]-L-cysteine + N(6)-ubiquitinyl-[acceptor protein]-L-lysine.. It functions in the pathway protein modification; protein ubiquitination. In terms of biological role, E3 ubiquitin-protein ligase that plays a role in various biological processes such as lung development or innate immunity. Seems to utilize UBE2E1. Promotes innate antiviral response by catalyzing 'Lys-63'-linked ubiquitination of IRF7. Also inhibits hepatitis C virus assembly by directly binding to viral E1 envelope glycoprotein to disrupt its interaction with E2. Plays an essential role in TLR4-mediated activation of MAPK pathways by promoting 'Lys-48'-linked polyubiquitination of the phosphatase DUSP1/MKP1. This Rattus norvegicus (Rat) protein is E3 ubiquitin-protein ligase NEURL3 (Neurl3).